A 247-amino-acid polypeptide reads, in one-letter code: MSDPLVLIPARLAATRLPNKPLADIAGEAMIVHVWRRAVEAGIGPVVVATDTAEIARTVEAAGGLAVMTRADHPSGSDRLAEALEIVDPEGRHDVVVNVQGDLPTIDPAIIGAAIVPLADRTVDIVTLCAPITDPHEADNPNVVKLVGHAVGPGRLRALYFTRARAPWGDGPLWHHIGLYAYRRTALSRFVALPPGELEVREKLEQLRALEAGMRIDAAIVDDLPLGVDTPADLERARALLQGRRLN.

This sequence belongs to the KdsB family.

The protein localises to the cytoplasm. It carries out the reaction 3-deoxy-alpha-D-manno-oct-2-ulosonate + CTP = CMP-3-deoxy-beta-D-manno-octulosonate + diphosphate. The protein operates within nucleotide-sugar biosynthesis; CMP-3-deoxy-D-manno-octulosonate biosynthesis; CMP-3-deoxy-D-manno-octulosonate from 3-deoxy-D-manno-octulosonate and CTP: step 1/1. It participates in bacterial outer membrane biogenesis; lipopolysaccharide biosynthesis. Its function is as follows. Activates KDO (a required 8-carbon sugar) for incorporation into bacterial lipopolysaccharide in Gram-negative bacteria. The polypeptide is 3-deoxy-manno-octulosonate cytidylyltransferase (Methylobacterium radiotolerans (strain ATCC 27329 / DSM 1819 / JCM 2831 / NBRC 15690 / NCIMB 10815 / 0-1)).